We begin with the raw amino-acid sequence, 377 residues long: MTPHEIDIALGMEKYYYEDWNELDGTIERPNGFKVIEEIDFKPAQDWKGETKGKYAVFLLTKWGIDHFSAISEVQKVLHSKVNYIGIKDANAITSQLVYIPLNEKQELIEKYQSRSFILKFLGFSSKKLNHTGNIFEISLSISDFDIVIERIEQIKKNPYLPAFIGYQRFGTRRPITHLIGKYLLRRDWEKAFYLILTYPFLSESKETIDIRKLIMEGDFKEAVRSIPSKFKQEKLLLKNYMRFNSYYLALKSSFIPISLYLDAYQSYLFNLYLSRKLDEYKNLNDKVNLLIRIPIYFNNCDDVCKEIYLDEGIERNFFKLQEFKISLRDLVRKAFMNIRDLKVNEETKTISFVLERGMYATILLREILRGDPRKFT.

Aspartate 89 functions as the Nucleophile in the catalytic mechanism. The TRUD domain maps to 160-377 (YLPAFIGYQR…ILRGDPRKFT (218 aa)).

The protein belongs to the pseudouridine synthase TruD family.

The catalysed reaction is uridine(13) in tRNA = pseudouridine(13) in tRNA. Its function is as follows. Could be responsible for synthesis of pseudouridine from uracil-13 in transfer RNAs. The sequence is that of Probable tRNA pseudouridine synthase D from Saccharolobus solfataricus (strain ATCC 35092 / DSM 1617 / JCM 11322 / P2) (Sulfolobus solfataricus).